Here is a 418-residue protein sequence, read N- to C-terminus: Tyrosine--tRNA ligase (418 aa).

Tyr34 contributes to the L-tyrosine binding site. The short motif at 39–48 is the 'HIGH' region element; the sequence is PTADSLHLGH. L-tyrosine-binding residues include Tyr169 and Gln173. The short motif at 229–233 is the 'KMSKS' region element; sequence KFGKS. Lys232 contacts ATP. The region spanning 352-418 is the S4 RNA-binding domain; sequence NNIVELLVSS…GKKKYFVLTY (67 aa).

Belongs to the class-I aminoacyl-tRNA synthetase family. TyrS type 1 subfamily. In terms of assembly, homodimer.

The protein localises to the cytoplasm. It catalyses the reaction tRNA(Tyr) + L-tyrosine + ATP = L-tyrosyl-tRNA(Tyr) + AMP + diphosphate + H(+). In terms of biological role, catalyzes the attachment of tyrosine to tRNA(Tyr) in a two-step reaction: tyrosine is first activated by ATP to form Tyr-AMP and then transferred to the acceptor end of tRNA(Tyr). This chain is Tyrosine--tRNA ligase, found in Streptococcus pneumoniae serotype 19F (strain G54).